We begin with the raw amino-acid sequence, 189 residues long: ATP-dependent protease subunit HslV (189 aa).

Thr12 is an active-site residue. Residues Ser172, Cys175, and Thr178 each contribute to the Na(+) site.

Belongs to the peptidase T1B family. HslV subfamily. A double ring-shaped homohexamer of HslV is capped on each side by a ring-shaped HslU homohexamer. The assembly of the HslU/HslV complex is dependent on binding of ATP.

It localises to the cytoplasm. The catalysed reaction is ATP-dependent cleavage of peptide bonds with broad specificity.. Allosterically activated by HslU binding. Protease subunit of a proteasome-like degradation complex believed to be a general protein degrading machinery. This chain is ATP-dependent protease subunit HslV, found in Ehrlichia chaffeensis (strain ATCC CRL-10679 / Arkansas).